Consider the following 1288-residue polypeptide: Structural maintenance of chromosomes protein 4 (1288 aa).

Polar residues predominate over residues 1-10 (MPRKGTQPST). Positions 1–55 (MPRKGTQPSTARRREEGPPPPSPDGASSDAEPEPPSGRTESPATAAETASEELDN) are disordered. Phosphoserine is present on residues serine 22 and serine 28. Threonine 39 is subject to Phosphothreonine. A compositionally biased stretch (low complexity) spans 39-48 (TESPATAAET). Serine 41 and serine 50 each carry phosphoserine. Residue 113 to 120 (GPNGSGKS) participates in ATP binding. Residue serine 143 is modified to Phosphoserine. Positions 272 to 588 (RRVEILNEHR…LFQKVEEAKS (317 aa)) form a coiled coil. An N6-acetyllysine mark is found at lysine 381 and lysine 679. The region spanning 613-727 (PGIYGRLGDL…ADNLDQATRV (115 aa)) is the SMC hinge domain. Residues 767 to 1020 (LVIEISEEEV…ALSIKLKLEQ (254 aa)) are a coiled coil. 2 positions are modified to phosphoserine: serine 982 and serine 1056. A coiled-coil region spans residues 1109–1129 (ELDKITYERDSFRQAYEDLRK).

It belongs to the SMC family. SMC4 subfamily. As to quaternary structure, forms a heterodimer with SMC2. Component of the condensin complex, which contains the SMC2 and SMC4 heterodimer, and three non SMC subunits that probably regulate the complex: BRRN1/CAPH, CNAP1/CAPD2 and CAPG. As to expression, widely expressed. Higher expression in testis, colon, thymus.

It localises to the nucleus. The protein localises to the cytoplasm. It is found in the chromosome. In terms of biological role, central component of the condensin complex, a complex required for conversion of interphase chromatin into mitotic-like condense chromosomes. The condensin complex probably introduces positive supercoils into relaxed DNA in the presence of type I topoisomerases and converts nicked DNA into positive knotted forms in the presence of type II topoisomerases. The protein is Structural maintenance of chromosomes protein 4 (SMC4) of Homo sapiens (Human).